A 927-amino-acid polypeptide reads, in one-letter code: Sodium/calcium exchanger 3 (927 aa).

An N-terminal signal peptide occupies residues 1 to 30; the sequence is MAWLRLQPLTSAFLHFGLVTFVLFLNGLRA. At 31 to 73 the chain is on the extracellular side; it reads EAGDLRDVPSAGQNNESCSGSSDCKEGVILPIWYPENPSLGDK. An N-linked (GlcNAc...) asparagine glycan is attached at N45. A helical membrane pass occupies residues 74–94; the sequence is IARVIVYFVALIYMFLGVSII. At 95–147 the chain is on the cytoplasmic side; sequence ADRFMASIEVITSQEREVTIKKPNGETSTTTIRVWNETVSNLTLMALGSSAPE. An Alpha-1 repeat occupies 140–180; it reads ALGSSAPEILLSLIEVCGHGFIAGDLGPSTIVGSAAFNMFI. The chain crosses the membrane as a helical span at residues 148-168; it reads ILLSLIEVCGHGFIAGDLGPS. Position 169 (T169) is a topological domain, extracellular. Residues 170–190 form a helical membrane-spanning segment; that stretch reads IVGSAAFNMFIIIGICVYVIP. Topologically, residues 191 to 202 are cytoplasmic; it reads DGETRKIKHLRV. A helical membrane pass occupies residues 203–223; it reads FFVTAAWSVFAYIWLYMILAV. Over 224–230 the chain is Extracellular; it reads FSPGVVQ. The helical transmembrane segment at 231–251 threads the bilayer; sequence VWEGLLTLFFFPVCVLLAWVA. Topologically, residues 252–726 are cytoplasmic; that stretch reads DKRLLFYKYM…DESGEERLPS (475 aa). Residues 253-272 are putative calmodulin-binding region; sequence KRLLFYKYMHKRYRTDKHRG. 2 consecutive Calx-beta domains span residues 386 to 485 and 519 to 619; these read VHTD…VRLS and ATVT…IALG. Residues E409, D445, D470, D471, I473, E475, E478, D525, D526, D527, E543, D579, E606, E607, and E672 each coordinate Ca(2+). A helical transmembrane segment spans residues 727-747; the sequence is CFDYVMHFLTVFWKVLFACVP. The Extracellular segment spans residues 748 to 754; that stretch reads PTEYCHG. A helical membrane pass occupies residues 755 to 775; the sequence is WACFVVSILIIGMLTAIIGDL. Residues 776 to 778 are Cytoplasmic-facing; the sequence is ASH. Residues 779 to 799 form a helical membrane-spanning segment; it reads FGCTIGLKDSVTAVVFVAFGT. The Alpha-2 repeat unit spans residues 796–832; it reads AFGTSVPDTFASKAAALQDVYADASIGNVTGSNAVNV. Over 800–828 the chain is Extracellular; sequence SVPDTFASKAAALQDVYADASIGNVTGSN. N-linked (GlcNAc...) asparagine glycosylation is present at N823. Residues 829 to 849 form a helical membrane-spanning segment; sequence AVNVFLGIGLAWSVAAIYWAM. Residues 850-860 are Cytoplasmic-facing; that stretch reads QGQEFHVSAGT. A helical membrane pass occupies residues 861–881; it reads LAFSVTLFTIFAFVCLSVLLY. Topologically, residues 882–903 are extracellular; sequence RRRPHLGGELGGPRGCKLATTW. The chain crosses the membrane as a helical span at residues 904–924; it reads LFVSLWLLYVLFATLEAYCYI. The Cytoplasmic portion of the chain corresponds to 925–927; the sequence is KGF.

The protein belongs to the Ca(2+):cation antiporter (CaCA) (TC 2.A.19) family. SLC8 subfamily. Interacts with AKAP1. In terms of tissue distribution, detected in neurons in brain cortex and hippocampus. Detected in pyramidal cell bodies and processes, in granule cells and interneurons in the CA1 and CA3 region of the hippocampus. Detected on astrocyte processes in brain cortex. Detected on endothelial cells in hippocampus capillaries (at protein level). Restricted to brain and skeletal muscle.

Its subcellular location is the cell membrane. It is found in the perikaryon. The protein resides in the cell projection. The protein localises to the dendrite. It localises to the dendritic spine. Its subcellular location is the sarcolemma. It is found in the cytoplasm. The protein resides in the sarcoplasm. The protein localises to the cell junction. It localises to the mitochondrion outer membrane. Its subcellular location is the endoplasmic reticulum membrane. It is found in the perinuclear region. It catalyses the reaction Ca(2+)(in) + 3 Na(+)(out) = Ca(2+)(out) + 3 Na(+)(in). With respect to regulation, calcium transport is down-regulated by Na(+) and stimulated by Ca(2+). Mediates the electrogenic exchange of Ca(2+) against Na(+) ions across the cell membrane, and thereby contributes to the regulation of cytoplasmic Ca(2+) levels and Ca(2+)-dependent cellular processes. Contributes to cellular Ca(2+) homeostasis in excitable cells, both in muscle and in brain. In a first phase, voltage-gated channels mediate the rapid increase of cytoplasmic Ca(2+) levels due to release of Ca(2+) stores from the endoplasmic reticulum. SLC8A3 mediates the export of Ca(2+) from the cell during the next phase, so that cytoplasmic Ca(2+) levels rapidly return to baseline. Contributes to Ca(2+) transport during excitation-contraction coupling in muscle. In neurons, contributes to the rapid decrease of cytoplasmic Ca(2+) levels back to baseline after neuronal activation, and thereby contributes to modulate synaptic plasticity, learning and memory. Required for normal oligodendrocyte differentiation and for normal myelination. Mediates Ca(2+) efflux from mitochondria and contributes to mitochondrial Ca(2+) ion homeostasis. The polypeptide is Sodium/calcium exchanger 3 (Slc8a3) (Rattus norvegicus (Rat)).